A 334-amino-acid chain; its full sequence is uncharacterized protein (334 aa).

WD repeat units lie at residues 56–86 (LKGE…KLWT), 98–128 (KPVA…RIWD), 139–169 (GHTS…EGWS), 220–250 (TDQG…RVFN), and 262–291 (LDDG…RVWN).

This is an uncharacterized protein from Synechocystis sp. (strain ATCC 27184 / PCC 6803 / Kazusa).